The primary structure comprises 144 residues: HMG1/2-like protein (144 aa).

Disordered stretches follow at residues methionine 1 to alanine 42 and proline 85 to aspartate 144. Composition is skewed to basic and acidic residues over residues alanine 8–lysine 35 and lysine 89–lysine 99. The segment at residues proline 36 to asparagine 105 is a DNA-binding region (HMG box). The segment covering asparagine 126 to aspartate 144 has biased composition (acidic residues).

Belongs to the HMGB family. As to expression, expressed at higher levels in dark-grown tissues, such as roots; and at lower levels in light-grown tissues, such as cotyledons and stems.

The protein resides in the nucleus. This Ipomoea nil (Japanese morning glory) protein is HMG1/2-like protein.